The primary structure comprises 221 residues: Phosphatidylserine decarboxylase proenzyme (221 aa).

S189 functions as the Schiff-base intermediate with substrate; via pyruvic acid in the catalytic mechanism. S189 is subject to Pyruvic acid (Ser); by autocatalysis.

This sequence belongs to the phosphatidylserine decarboxylase family. PSD-A subfamily. Heterodimer of a large membrane-associated beta subunit and a small pyruvoyl-containing alpha subunit. Pyruvate serves as cofactor. In terms of processing, is synthesized initially as an inactive proenzyme. Formation of the active enzyme involves a self-maturation process in which the active site pyruvoyl group is generated from an internal serine residue via an autocatalytic post-translational modification. Two non-identical subunits are generated from the proenzyme in this reaction, and the pyruvate is formed at the N-terminus of the alpha chain, which is derived from the carboxyl end of the proenzyme. The post-translation cleavage follows an unusual pathway, termed non-hydrolytic serinolysis, in which the side chain hydroxyl group of the serine supplies its oxygen atom to form the C-terminus of the beta chain, while the remainder of the serine residue undergoes an oxidative deamination to produce ammonia and the pyruvoyl prosthetic group on the alpha chain.

The protein resides in the cell membrane. It catalyses the reaction a 1,2-diacyl-sn-glycero-3-phospho-L-serine + H(+) = a 1,2-diacyl-sn-glycero-3-phosphoethanolamine + CO2. It participates in phospholipid metabolism; phosphatidylethanolamine biosynthesis; phosphatidylethanolamine from CDP-diacylglycerol: step 2/2. Functionally, catalyzes the formation of phosphatidylethanolamine (PtdEtn) from phosphatidylserine (PtdSer). The chain is Phosphatidylserine decarboxylase proenzyme from Porphyromonas gingivalis (strain ATCC 33277 / DSM 20709 / CIP 103683 / JCM 12257 / NCTC 11834 / 2561).